Here is a 260-residue protein sequence, read N- to C-terminus: ATP synthase subunit a (260 aa).

7 helical membrane passes run phenylalanine 29–isoleucine 49, phenylalanine 95–isoleucine 115, histidine 124–phenylalanine 144, phenylalanine 151–leucine 171, methionine 191–methionine 211, glutamate 213–leucine 233, and valine 237–isoleucine 257.

Belongs to the ATPase A chain family. F-type ATPases have 2 components, CF(1) - the catalytic core - and CF(0) - the membrane proton channel. CF(1) has five subunits: alpha(3), beta(3), gamma(1), delta(1), epsilon(1). CF(0) has three main subunits: a, b and c.

The protein resides in the mitochondrion inner membrane. In terms of biological role, mitochondrial membrane ATP synthase (F(1)F(0) ATP synthase or Complex V) produces ATP from ADP in the presence of a proton gradient across the membrane which is generated by electron transport complexes of the respiratory chain. F-type ATPases consist of two structural domains, F(1) - containing the extramembraneous catalytic core and F(0) - containing the membrane proton channel, linked together by a central stalk and a peripheral stalk. During catalysis, ATP synthesis in the catalytic domain of F(1) is coupled via a rotary mechanism of the central stalk subunits to proton translocation. Key component of the proton channel; it may play a direct role in the translocation of protons across the membrane. The chain is ATP synthase subunit a (ATP6) from Brassica napus (Rape).